The primary structure comprises 940 residues: Valine--tRNA ligase (940 aa).

A 'HIGH' region motif is present at residues proline 47–histidine 57. Positions lysine 564–serine 568 match the 'KMSKS' region motif. Lysine 567 lines the ATP pocket. Residues valine 873–alanine 937 are a coiled coil.

It belongs to the class-I aminoacyl-tRNA synthetase family. ValS type 1 subfamily. Monomer.

The protein resides in the cytoplasm. It catalyses the reaction tRNA(Val) + L-valine + ATP = L-valyl-tRNA(Val) + AMP + diphosphate. Catalyzes the attachment of valine to tRNA(Val). As ValRS can inadvertently accommodate and process structurally similar amino acids such as threonine, to avoid such errors, it has a 'posttransfer' editing activity that hydrolyzes mischarged Thr-tRNA(Val) in a tRNA-dependent manner. The chain is Valine--tRNA ligase from Chlamydia abortus (strain DSM 27085 / S26/3) (Chlamydophila abortus).